Reading from the N-terminus, the 763-residue chain is Translation initiation factor IF-2, chloroplastic (763 aa).

Disordered stretches follow at residues 1–22, 52–122, and 149–168; these read MFLNNQNFEKKTSSYSTNNNSS, IDKS…SNSA, and NNKIPQQKKQQVASSIDQSI. Positions 13 to 22 are enriched in low complexity; the sequence is SSYSTNNNSS. Positions 73–92 are enriched in basic and acidic residues; that stretch reads RIDKKNKNFNKAHDLLDNKK. Over residues 93-104 the composition is skewed to basic residues; that stretch reads NKNRQRKKIKNK. Positions 151–168 are enriched in polar residues; that stretch reads KIPQQKKQQVASSIDQSI. Residues 261-429 enclose the tr-type G domain; it reads NRPPVVTILG…ILLLAELENL (169 aa). GTP contacts are provided by residues 270–277, 316–320, and 370–373; these read GHVDHGKT, DTPGH, and SKID.

The protein belongs to the TRAFAC class translation factor GTPase superfamily. Classic translation factor GTPase family. IF-2 subfamily.

Its subcellular location is the plastid. It is found in the chloroplast. One of the essential components for the initiation of protein synthesis. Protects formylmethionyl-tRNA from spontaneous hydrolysis and promotes its binding to the 30S ribosomal subunits. Also involved in the hydrolysis of GTP during the formation of the 70S ribosomal complex. The sequence is that of Translation initiation factor IF-2, chloroplastic (infB) from Porphyra purpurea (Red seaweed).